We begin with the raw amino-acid sequence, 147 residues long: Large ribosomal subunit protein bL9 (147 aa).

The protein belongs to the bacterial ribosomal protein bL9 family.

Functionally, binds to the 23S rRNA. The sequence is that of Large ribosomal subunit protein bL9 from Bacteroides thetaiotaomicron (strain ATCC 29148 / DSM 2079 / JCM 5827 / CCUG 10774 / NCTC 10582 / VPI-5482 / E50).